The sequence spans 1061 residues: Atrial natriuretic peptide receptor 1 (1061 aa).

The first 32 residues, 1-32, serve as a signal peptide directing secretion; it reads MPGPRRPAGSRLRLLLLLLLPPLLLLLRGSHA. The Extracellular segment spans residues 33-473; the sequence is GNLTVAVVLP…CNQDHLSTLE (441 aa). N34 and N45 each carry an N-linked (GlcNAc...) asparagine glycan. Chloride contacts are provided by S85, G117, and C118. 2 disulfides stabilise this stretch: C92–C118 and C196–C245. Residues N212, N338, N379, N386, and N427 are each glycosylated (N-linked (GlcNAc...) asparagine). A disulfide bond links C455 and C464. The helical transmembrane segment at 474–494 threads the bilayer; it reads VLALVGSLSLLGILIVSFFIY. The Cytoplasmic segment spans residues 495–1061; that stretch reads RKMQLEKELA…LGERGSSTRG (567 aa). S519 and S529 each carry phosphoserine. One can recognise a Protein kinase domain in the interval 528–805; it reads GSRLTLSGRG…QIRLTLRKFN (278 aa). T532 is subject to Phosphothreonine. Residues S534, S538, and S542 each carry the phosphoserine modification. T545 bears the Phosphothreonine mark. Residues 876 to 1006 enclose the Guanylate cyclase domain; the sequence is TIYFSDIVGF…DTVNTASRME (131 aa).

It belongs to the adenylyl cyclase class-4/guanylyl cyclase family. In terms of assembly, homodimer. In terms of processing, phosphorylation of the protein kinase-like domain is required for full activation by ANP.

It localises to the membrane. It catalyses the reaction GTP = 3',5'-cyclic GMP + diphosphate. Its function is as follows. Receptor for the atrial natriuretic peptide NPPA/ANP and the brain natriuretic peptide NPPB/BNP which are potent vasoactive hormones playing a key role in cardiovascular homeostasis. Plays an essential role in the regulation of endothelial cell senescence and vascular aging. Upon activation by ANP or BNP, stimulates the production of cyclic guanosine monophosphate (cGMP) that promotes vascular tone and volume homeostasis by activation of protein kinase cGMP-dependent 1/PRKG1 and subsequently PRKAA1, thereby controlling blood pressure and maintaining cardiovascular homeostasis. In Homo sapiens (Human), this protein is Atrial natriuretic peptide receptor 1.